We begin with the raw amino-acid sequence, 178 residues long: ATP synthase subunit delta (178 aa).

This sequence belongs to the ATPase delta chain family. As to quaternary structure, F-type ATPases have 2 components, F(1) - the catalytic core - and F(0) - the membrane proton channel. F(1) has five subunits: alpha(3), beta(3), gamma(1), delta(1), epsilon(1). F(0) has three main subunits: a(1), b(2) and c(10-14). The alpha and beta chains form an alternating ring which encloses part of the gamma chain. F(1) is attached to F(0) by a central stalk formed by the gamma and epsilon chains, while a peripheral stalk is formed by the delta and b chains.

The protein resides in the cell membrane. In terms of biological role, f(1)F(0) ATP synthase produces ATP from ADP in the presence of a proton or sodium gradient. F-type ATPases consist of two structural domains, F(1) containing the extramembraneous catalytic core and F(0) containing the membrane proton channel, linked together by a central stalk and a peripheral stalk. During catalysis, ATP synthesis in the catalytic domain of F(1) is coupled via a rotary mechanism of the central stalk subunits to proton translocation. Functionally, this protein is part of the stalk that links CF(0) to CF(1). It either transmits conformational changes from CF(0) to CF(1) or is implicated in proton conduction. This Streptococcus pyogenes serotype M3 (strain ATCC BAA-595 / MGAS315) protein is ATP synthase subunit delta.